Reading from the N-terminus, the 370-residue chain is Lysophosphatidic acid receptor 4 (370 aa).

Residues methionine 1–glycine 43 are Extracellular-facing. N-linked (GlcNAc...) asparagine glycosylation is found at asparagine 15, asparagine 24, and asparagine 28. Residues alanine 44–phenylalanine 64 form a helical membrane-spanning segment. Topologically, residues cysteine 65 to glutamate 73 are cytoplasmic. A helical transmembrane segment spans residues threonine 74–phenylalanine 94. At lysine 95 to lysine 112 the chain is on the extracellular side. Cysteine 111 and cysteine 188 are oxidised to a cystine. A helical transmembrane segment spans residues isoleucine 113–serine 133. Residues valine 134–serine 155 lie on the Cytoplasmic side of the membrane. The helical transmembrane segment at alanine 156–phenylalanine 176 threads the bilayer. At serine 177–lysine 203 the chain is on the extracellular side. Asparagine 183 is a glycosylation site (N-linked (GlcNAc...) asparagine). Residues isoleucine 204–serine 224 traverse the membrane as a helical segment. At serine 225–histidine 254 the chain is on the cytoplasmic side. The helical transmembrane segment at methionine 255–valine 275 threads the bilayer. Residues arginine 276–proline 294 lie on the Extracellular side of the membrane. A helical transmembrane segment spans residues isoleucine 295–leucine 315. The Cytoplasmic segment spans residues glutamate 316–phenylalanine 370.

Belongs to the G-protein coupled receptor 1 family.

The protein localises to the cell membrane. Functionally, receptor for lysophosphatidic acid (LPA), a mediator of diverse cellular activities. Transduces a signal by increasing the intracellular calcium ions and by stimulating adenylyl cyclase activity. The rank order of potency for agonists of this receptor is 1-oleoyl- &gt; 1-stearoyl- &gt; 1-palmitoyl- &gt; 1-myristoyl- &gt; 1-alkyl- &gt; 1-alkenyl-LPA. This chain is Lysophosphatidic acid receptor 4 (Lpar4), found in Mus musculus (Mouse).